A 103-amino-acid chain; its full sequence is MPAIEVGRVCVIIAGRRAGKKCVIVDLIDDKFVLVTGPKELNGVKRRRMNIKHLEPLDKKVEIEKGADDAKVLEAIRQAGLEEFMKEEVKPELPVPPSLGAYL.

It belongs to the eukaryotic ribosomal protein eL14 family.

This Ignicoccus hospitalis (strain KIN4/I / DSM 18386 / JCM 14125) protein is Large ribosomal subunit protein eL14.